The primary structure comprises 431 residues: Fumarylacetoacetase (431 aa).

Aspartate 133 lines the Ca(2+) pocket. Tyrosine 135 lines the substrate pocket. The Proton acceptor role is filled by histidine 140. Substrate is bound at residue arginine 149. Ca(2+) contacts are provided by glutamate 209, glutamate 211, and aspartate 243. Position 243 (aspartate 243) interacts with Mg(2+). The substrate site is built by glutamine 250 and tyrosine 254. 2 residues coordinate Mg(2+): lysine 263 and threonine 267. Substrate is bound at residue threonine 362.

The protein belongs to the FAH family. The cofactor is Ca(2+). Mg(2+) is required as a cofactor.

It carries out the reaction 4-fumarylacetoacetate + H2O = acetoacetate + fumarate + H(+). It functions in the pathway amino-acid degradation; L-phenylalanine degradation; acetoacetate and fumarate from L-phenylalanine: step 6/6. Its function is as follows. Use of phenylalanine and phenylacetate as a carbon source. The sequence is that of Fumarylacetoacetase (fahA) from Emericella nidulans (strain FGSC A4 / ATCC 38163 / CBS 112.46 / NRRL 194 / M139) (Aspergillus nidulans).